Consider the following 467-residue polypeptide: Cytochrome P450 85A3 (467 aa).

A helical transmembrane segment spans residues 2–22; it reads AIFLIIFVVFFGFCILSTPLF. C417 is a binding site for heme.

It belongs to the cytochrome P450 family. Requires heme as cofactor. In terms of tissue distribution, expressed in fruits.

It is found in the membrane. It catalyses the reaction 6-deoxocastasterone + reduced [NADPH--hemoprotein reductase] + O2 = 6alpha-hydroxycastasterone + oxidized [NADPH--hemoprotein reductase] + H2O + H(+). It carries out the reaction 6alpha-hydroxycastasterone + reduced [NADPH--hemoprotein reductase] + O2 = castasterone + oxidized [NADPH--hemoprotein reductase] + 2 H2O + H(+). The catalysed reaction is castasterone + reduced [NADPH--hemoprotein reductase] + O2 = brassinolide + oxidized [NADPH--hemoprotein reductase] + H2O + H(+). The enzyme catalyses 6-deoxocastasterone + 2 reduced [NADPH--hemoprotein reductase] + 2 O2 = castasterone + 2 oxidized [NADPH--hemoprotein reductase] + 3 H2O + 2 H(+). The protein operates within plant hormone biosynthesis; brassinosteroid biosynthesis. Functionally, catalyzes the C6-oxidation step in brassinosteroids biosynthesis. Converts 6-deoxocastasterone (6-deoxoCS) to castasterone (CS), and castasterone (CS) to brassinolide (BL). The polypeptide is Cytochrome P450 85A3 (Solanum lycopersicum (Tomato)).